Consider the following 535-residue polypeptide: Dimethylaniline monooxygenase [N-oxide-forming] 2 (535 aa).

Ala-2 carries the post-translational modification N-acetylalanine. FAD-binding positions include 9 to 13, Glu-32, 40 to 41, and 61 to 62; these read GAGVS, VW, and NT. NADP(+) is bound by residues 60–61 and 195–198; these read TN and SGSD. A Glycyl lysine isopeptide (Lys-Gly) (interchain with G-Cter in SUMO) cross-link involves residue Lys-492. Residues 510–530 traverse the membrane as a helical segment; the sequence is FPVSFLLKILGLVAVVVAFFC.

It belongs to the FMO family. The cofactor is FAD. Requires Mg(2+) as cofactor.

Its subcellular location is the microsome membrane. It is found in the endoplasmic reticulum membrane. It carries out the reaction N,N-dimethylaniline + NADPH + O2 + H(+) = N,N-dimethylaniline N-oxide + NADP(+) + H2O. Functionally, catalyzes the oxidative metabolism of numerous xenobiotics, including mainly therapeutic drugs and insecticides that contain a soft nucleophile, most commonly nitrogen and sulfur and participates to their bioactivation. This chain is Dimethylaniline monooxygenase [N-oxide-forming] 2, found in Macaca mulatta (Rhesus macaque).